We begin with the raw amino-acid sequence, 584 residues long: ETHYLENE INSENSITIVE 3-like 1 protein (584 aa).

A coiled-coil region spans residues 41 to 74 (YTDDEMDVDELEKRMWRDKMRLKRLKEQQSKCKE). Positions 67–80 (EQQSKCKEGVDGSK) are enriched in basic and acidic residues. Disordered stretches follow at residues 67–93 (EQQS…RKKM) and 565–584 (EGMG…SIWF).

Belongs to the EIN3 family. Acts as a homodimer to bind the primary ethylene response element.

Its subcellular location is the nucleus. Probable transcription factor acting as a positive regulator in the ethylene response pathway. Could bind the primary ethylene response element present in the ETHYLENE-RESPONSE-FACTOR1 promoter. The chain is ETHYLENE INSENSITIVE 3-like 1 protein (EIL1) from Arabidopsis thaliana (Mouse-ear cress).